The chain runs to 396 residues: Purine ribonucleoside efflux pump NepI (396 aa).

Over 1–21 (MSEFIAENRGADAITRPNWSA) the chain is Cytoplasmic. The helical transmembrane segment at 22–42 (VFSVAFCVACLIIVEFLPVSL) threads the bilayer. Over 43 to 54 (LTPMAQDLGISE) the chain is Periplasmic. A helical membrane pass occupies residues 55 to 75 (GVAGQSVTVTAFVAMFASLFI). The Cytoplasmic portion of the chain corresponds to 76–85 (TQTIQATDRR). Residues 86 to 106 (YVVILFAVLLTLSCLLVSFAN) form a helical membrane-spanning segment. Position 107 (Ser107) is a topological domain, periplasmic. A helical transmembrane segment spans residues 108 to 128 (FSLLLIGRACLGLALGGFWAM). Topologically, residues 129 to 147 (SASLTMRLVPPRTVPKALS) are cytoplasmic. The helical transmembrane segment at 148-168 (VIFGAVSIALVIAAPLGCFLG) threads the bilayer. The Periplasmic segment spans residues 169–175 (ELIGWRN). Residues 176–196 (VFNAAAAMGVLCIFWIIKSLP) form a helical membrane-spanning segment. At 197–215 (SLPGEPSHQKQNTFRLLQR) the chain is on the cytoplasmic side. The helical transmembrane segment at 216–236 (PGVMAGMIAIFMSFAGQFAFF) threads the bilayer. Residues 237-255 (TYIRPVYMTLAGFGVDGLT) lie on the Periplasmic side of the membrane. The chain crosses the membrane as a helical span at residues 256 to 276 (LVLLSFGIASFVGTSLSSFIL). At 277–281 (KRSVK) the chain is on the cytoplasmic side. Residues 282 to 302 (LALAGAPFVLALSALVLTLWG) form a helical membrane-spanning segment. The Periplasmic portion of the chain corresponds to 303 to 305 (SDK). A helical transmembrane segment spans residues 306 to 326 (IVATGVAIIWGLTFALIPVGW). Over 327 to 343 (STWITRSLADQAEKAGS) the chain is Cytoplasmic. Residues 344–364 (IQVAVIQLANTCGAAIGGYAL) form a helical membrane-spanning segment. The Periplasmic portion of the chain corresponds to 365–366 (DN). The helical transmembrane segment at 367–387 (IGLTSPLMLSGTLMLLTALLV) threads the bilayer. Over 388–396 (TAKVKMKKS) the chain is Cytoplasmic.

Belongs to the major facilitator superfamily. DHA1 family. NepI (TC 2.A.1.2.26) subfamily.

It localises to the cell inner membrane. The enzyme catalyses inosine(in) + H(+)(out) = inosine(out) + H(+)(in). It catalyses the reaction guanosine(in) + H(+)(out) = guanosine(out) + H(+)(in). In terms of biological role, involved in the efflux of purine ribonucleosides, such as inosine and guanosine. This chain is Purine ribonucleoside efflux pump NepI, found in Escherichia coli O157:H7.